Reading from the N-terminus, the 175-residue chain is Large ribosomal subunit protein uL30 (175 aa).

The protein belongs to the universal ribosomal protein uL30 family. Part of the 50S ribosomal subunit.

This chain is Large ribosomal subunit protein uL30, found in Pyrobaculum neutrophilum (strain DSM 2338 / JCM 9278 / NBRC 100436 / V24Sta) (Thermoproteus neutrophilus).